Here is a 314-residue protein sequence, read N- to C-terminus: Fumarylacetoacetate hydrolase domain-containing protein 2 (314 aa).

Residues Glu-159, Glu-161, and Asp-190 each contribute to the a divalent metal cation site. Residue Lys-203 is modified to N6-acetyllysine; alternate. The residue at position 203 (Lys-203) is an N6-succinyllysine; alternate. Lys-234 is subject to N6-acetyllysine.

The protein belongs to the FAH family. Requires Ca(2+) as cofactor. It depends on Mg(2+) as a cofactor.

Functionally, may have hydrolase activity. The sequence is that of Fumarylacetoacetate hydrolase domain-containing protein 2 (FAHD2) from Pongo abelii (Sumatran orangutan).